The sequence spans 262 residues: Phycoerythrobilin:ferredoxin oxidoreductase (262 aa).

It belongs to the HY2 family.

It catalyses the reaction (3Z)-phycoerythrobilin + oxidized 2[4Fe-4S]-[ferredoxin] = 15,16-dihydrobiliverdin + reduced 2[4Fe-4S]-[ferredoxin] + 2 H(+). Catalyzes the two-electron reduction of the C2 and C3(1) diene system of 15,16-dihydrobiliverdin. The polypeptide is Phycoerythrobilin:ferredoxin oxidoreductase (pebB) (Parasynechococcus marenigrum (strain WH8102)).